The sequence spans 152 residues: Lipoprotein signal peptidase (152 aa).

Transmembrane regions (helical) follow at residues 5 to 25, 61 to 81, and 84 to 104; these read LFVLSLILLVALDQLSKFWIV, WFFVAITVLVIGYAIYYLATH, and LNIWKQLALLLIISGGIGNFI. Residues D114 and D130 contribute to the active site. The helical transmembrane segment at 125–145 threads the bilayer; sequence IFNVADSYLTVGVILLVICLW.

Belongs to the peptidase A8 family.

Its subcellular location is the cell membrane. The catalysed reaction is Release of signal peptides from bacterial membrane prolipoproteins. Hydrolyzes -Xaa-Yaa-Zaa-|-(S,diacylglyceryl)Cys-, in which Xaa is hydrophobic (preferably Leu), and Yaa (Ala or Ser) and Zaa (Gly or Ala) have small, neutral side chains.. It participates in protein modification; lipoprotein biosynthesis (signal peptide cleavage). This protein specifically catalyzes the removal of signal peptides from prolipoproteins. The protein is Lipoprotein signal peptidase of Streptococcus pyogenes serotype M6 (strain ATCC BAA-946 / MGAS10394).